A 391-amino-acid chain; its full sequence is Multidrug resistance protein MdtL (391 aa).

Helical transmembrane passes span 4-24, 42-62, 69-89, 93-113, 131-151, 158-178, 203-222, 245-265, 269-289, 293-313, 324-346, and 363-383; these read FLICSFALVLLYPAGIDMYLV, IAFSVYLAGMAAAMLFAGKVA, PVAIPGAALFIIASVFCSLAE, LFLAGRFLQGLGAGCCYVVAF, LLNGITCIIPVLAPVLGHLIM, SLFWAMATMGIAVLMLSLFIL, FFLSRVVITTLSVSVILTFV, ALTAGVSMTVSFSTPFALGIF, TLMITSQVLFLAAGITLAVSP, ISLFGITLICAGFSIGFGVAM, AGVASSTLGIAQVCGSSLWIWLA, and ACSIVSLLLIMFVTPGRPVAA.

The protein belongs to the major facilitator superfamily. DHA1 family. MdtL (TC 2.A.1.2.22) subfamily.

It is found in the cell inner membrane. Functionally, confers resistance to chloramphenicol. In Escherichia fergusonii (strain ATCC 35469 / DSM 13698 / CCUG 18766 / IAM 14443 / JCM 21226 / LMG 7866 / NBRC 102419 / NCTC 12128 / CDC 0568-73), this protein is Multidrug resistance protein MdtL.